We begin with the raw amino-acid sequence, 255 residues long: Small ribosomal subunit protein eS1 (255 aa).

The span at 1 to 18 (MAVGKNKRLSKGKKGLKK) shows a compositional bias: basic residues. A disordered region spans residues 1–28 (MAVGKNKRLSKGKKGLKKRTQDPFSRKD). An N-acetylalanine; partial modification is found at alanine 2. Residues 19 to 28 (RTQDPFSRKD) show a composition bias toward basic and acidic residues.

The protein belongs to the eukaryotic ribosomal protein eS1 family. In terms of assembly, component of the small ribosomal subunit. Mature ribosomes consist of a small (40S) and a large (60S) subunit. The 40S subunit contains about 33 different proteins and 1 molecule of RNA (18S). The 60S subunit contains about 49 different proteins and 3 molecules of RNA (25S, 5.8S and 5S).

Its subcellular location is the cytoplasm. This chain is Small ribosomal subunit protein eS1, found in Ajellomyces capsulatus (strain NAm1 / WU24) (Darling's disease fungus).